The following is a 336-amino-acid chain: Transmembrane protein 120A (336 aa).

Residues 1-131 are Cytoplasmic-facing; it reads MNSPALQDCV…KQSKFAYKDE (131 aa). CoA is bound at residue Lys129. Residues 132-151 traverse the membrane as a helical segment; that stretch reads YEKFKLYLTMILMVLSFICR. Topologically, residues 152-157 are extracellular; that stretch reads FVLNSR. The helical transmembrane segment at 158–176 threads the bilayer; sequence VTDAVFNFLLVWYYCTLTI. Residues 177-189 are Cytoplasmic-facing; that stretch reads RESILINNGSRIK. Positions 186 and 187 each coordinate CoA. The helical transmembrane segment at 190 to 208 threads the bilayer; sequence GWWVLNHYISTFLSGVMLT. Residues 209–217 lie on the Extracellular side of the membrane; sequence WPDGLMYQM. Residues 218-239 form a helical membrane-spanning segment; sequence FRNQFLSFSMYQSFVQFLQYYY. Residues Gln236, Tyr239, and Gln240 each contribute to the CoA site. Residues 240-269 lie on the Cytoplasmic side of the membrane; that stretch reads QSGCLYRLRALGERHNMDLTVEGFQSWMWR. Residues 270 to 293 form a helical membrane-spanning segment; that stretch reads GLTFLLPFLFFGQFWQLYNAITLF. At 294–303 the chain is on the extracellular side; it reads KLARHPECKE. The chain crosses the membrane as a helical span at residues 304–329; sequence WQVIMCGLPFLVHFLGNFFTTLRVVH. The Cytoplasmic portion of the chain corresponds to 330–336; that stretch reads QKFQKQN. Residue Lys331 coordinates CoA.

It belongs to the TMEM120 family. Homodimer.

It is found in the cell membrane. The protein resides in the nucleus inner membrane. The protein localises to the endoplasmic reticulum. Its function is as follows. Multifunctional protein involved in mechanosensation, and plays an essential role in lipid metabolism. May function as a potential ion channel involved in sensing mechanical stimuli. TMEM120A is structurally similar to a lipid-modifying enzyme, ELOVL7, and contains a bound coenzyme A molecule, which suggests it might function as an enzyme in lipid metabolism. This Xenopus tropicalis (Western clawed frog) protein is Transmembrane protein 120A.